Reading from the N-terminus, the 329-residue chain is BTB/POZ domain-containing protein At1g55760 (329 aa).

Positions 164-231 (TDITINASDG…IYGNIQNEDF (68 aa)) constitute a BTB domain.

It functions in the pathway protein modification; protein ubiquitination. In terms of biological role, may act as a substrate-specific adapter of an E3 ubiquitin-protein ligase complex (CUL3-RBX1-BTB) which mediates the ubiquitination and subsequent proteasomal degradation of target proteins. The chain is BTB/POZ domain-containing protein At1g55760 from Arabidopsis thaliana (Mouse-ear cress).